Here is an 87-residue protein sequence, read N- to C-terminus: Small ribosomal subunit protein uS17 (87 aa).

The protein belongs to the universal ribosomal protein uS17 family. As to quaternary structure, part of the 30S ribosomal subunit.

Its function is as follows. One of the primary rRNA binding proteins, it binds specifically to the 5'-end of 16S ribosomal RNA. In Chromobacterium violaceum (strain ATCC 12472 / DSM 30191 / JCM 1249 / CCUG 213 / NBRC 12614 / NCIMB 9131 / NCTC 9757 / MK), this protein is Small ribosomal subunit protein uS17.